Here is a 203-residue protein sequence, read N- to C-terminus: Putative 3-methyladenine DNA glycosylase (203 aa).

It belongs to the DNA glycosylase MPG family.

This is Putative 3-methyladenine DNA glycosylase from Desulfitobacterium hafniense (strain Y51).